Reading from the N-terminus, the 868-residue chain is Leucine--tRNA ligase (868 aa).

A 'HIGH' region motif is present at residues 42-52 (PYPSGKLHMGH). The short motif at 627–631 (KMSKS) is the 'KMSKS' region element. Lys-630 provides a ligand contact to ATP.

Belongs to the class-I aminoacyl-tRNA synthetase family.

The protein resides in the cytoplasm. It carries out the reaction tRNA(Leu) + L-leucine + ATP = L-leucyl-tRNA(Leu) + AMP + diphosphate. This chain is Leucine--tRNA ligase, found in Pseudomonas savastanoi pv. phaseolicola (strain 1448A / Race 6) (Pseudomonas syringae pv. phaseolicola (strain 1448A / Race 6)).